Reading from the N-terminus, the 245-residue chain is UPF0328 protein ECU09_2010 (245 aa).

This sequence belongs to the UPF0328 family.

This is UPF0328 protein ECU09_2010 from Encephalitozoon cuniculi (strain GB-M1) (Microsporidian parasite).